An 875-amino-acid polypeptide reads, in one-letter code: Serrate RNA effector molecule homolog (875 aa).

The tract at residues 1–90 (MGDSDDEYDR…RRDWDEHSSD (90 aa)) is disordered. The residue at position 2 (Gly-2) is an N-acetylglycine. Ser-4 is modified (phosphoserine). Tyr-8 carries the phosphotyrosine modification. Residues 8-73 (YDRRRRDKFR…ERFSPPRHEL (66 aa)) are compositionally biased toward basic and acidic residues. Phosphoserine is present on residues Ser-67, Ser-74, and Ser-136. Residue Lys-150 forms a Glycyl lysine isopeptide (Lys-Gly) (interchain with G-Cter in SUMO2) linkage. Positions 272 to 411 (EEEEQAGKTG…KPKDAAGLEC (140 aa)) are disordered. The span at 297-345 (EGERKANDKDEKKEDGKQAENDSSNDDKTKKSEGDGDKEEKKEEAEKEA) shows a compositional bias: basic and acidic residues. The span at 369–386 (SESESEGGQAEEEKEEAE) shows a compositional bias: acidic residues. The segment covering 387-411 (EALKEKEKPKEEEKEKPKDAAGLEC) has biased composition (basic and acidic residues). Phosphoserine occurs at positions 492 and 539. Thr-543 carries the phosphothreonine modification. Phosphoserine is present on Ser-569. The tract at residues 571–597 (EEEELLGSSGGPPPEEPPKEGNPAEIN) is disordered. Thr-670 carries the phosphothreonine modification. A Phosphoserine modification is found at Ser-678. An omega-N-methylarginine mark is found at Arg-832, Arg-839, and Arg-849. The interval 834 to 853 (NYDAFRGQGGYPGKPRNRMV) is disordered.

This sequence belongs to the ARS2 family. In terms of assembly, interacts with CASP8AP2 and ERBB4. Interacts with NCBP1/CBP80 and DROSHA. Interacts with LUZP4. Interacts with NCBP2/CBP20 and NCBP3. Interacts with MTREX. In terms of tissue distribution, widely expressed, with a preference for proliferating cells. Highly expressed in hematopoietic tissues and reduced or absent expression in parenchymal organs like liver and kidney. In the brain, expressed in the subventricular zone by niche astrocytes, ependymal cells and neural stem cells. In this cerebral context, expressed in slowly dividing cells.

Its subcellular location is the nucleus. The protein resides in the nucleoplasm. It is found in the cytoplasm. Functionally, acts as a mediator between the cap-binding complex (CBC) and the primary microRNAs (miRNAs) processing machinery during cell proliferation. Contributes to the stability and delivery of capped primary miRNA transcripts to the primary miRNA processing complex containing DGCR8 and DROSHA, thereby playing a role in RNA-mediated gene silencing (RNAi) by miRNAs. Binds capped RNAs (m7GpppG-capped RNA); however interaction is probably mediated via its interaction with NCBP1/CBP80 component of the CBC complex. Involved in cell cycle progression at S phase. Does not directly confer arsenite resistance but rather modulates arsenic sensitivity. Independently of its activity on miRNAs, necessary and sufficient to promote neural stem cell self-renewal. Does so by directly binding SOX2 promoter and positively regulating its transcription. In Mus musculus (Mouse), this protein is Serrate RNA effector molecule homolog (Srrt).